We begin with the raw amino-acid sequence, 438 residues long: Dol-P-Man:Man(5)GlcNAc(2)-PP-Dol alpha-1,3-mannosyltransferase (438 aa).

At serine 13 the chain carries Phosphoserine. The next 11 membrane-spanning stretches (helical) occupy residues 41-61, 95-115, 123-143, 149-169, 172-192, 203-223, 231-251, 289-309, 332-352, 356-376, and 407-427; these read YTLLVASCLCIAEVGITFWVI, TGPLVYPAGFLYIFTGLFYAT, MAQNIFAVLYLVTLVLVFLIY, VPPFVFFFMCCASYRVHSIFV, LFNDPVAMALLFLSINLFLAQ, LAVSVKMNVLLFAPGLLFLLL, ALPKLAICAALQVVLGLPFLL, FHLALLAAHLSLLLLFALCRW, ALTPNQIVSILFTSNFIGICF, LHYQFYVWYFHTLPYLLWAMP, and AALHLCHAVVLLQLWLSPESF.

Belongs to the glycosyltransferase ALG3 family.

It is found in the endoplasmic reticulum membrane. It catalyses the reaction an alpha-D-Man-(1-&gt;2)-alpha-D-Man-(1-&gt;2)-alpha-D-Man-(1-&gt;3)-[alpha-D-Man-(1-&gt;6)]-beta-D-Man-(1-&gt;4)-beta-D-GlcNAc-(1-&gt;4)-alpha-D-GlcNAc-diphospho-di-trans,poly-cis-dolichol + a di-trans,poly-cis-dolichyl beta-D-mannosyl phosphate = an alpha-D-Man-(1-&gt;2)-alpha-D-Man-(1-&gt;2)-alpha-D-Man-(1-&gt;3)-[alpha-D-Man-(1-&gt;3)-alpha-D-Man-(1-&gt;6)]-beta-D-Man-(1-&gt;4)-beta-D-GlcNAc-(1-&gt;4)-alpha-D-GlcNAc-diphospho-di-trans,poly-cis-dolichol + a di-trans,poly-cis-dolichyl phosphate + H(+). Its pathway is protein modification; protein glycosylation. Dol-P-Man:Man(5)GlcNAc(2)-PP-Dol alpha-1,3-mannosyltransferase that operates in the biosynthetic pathway of dolichol-linked oligosaccharides, the glycan precursors employed in protein asparagine (N)-glycosylation. The assembly of dolichol-linked oligosaccharides begins on the cytosolic side of the endoplasmic reticulum membrane and finishes in its lumen. The sequential addition of sugars to dolichol pyrophosphate produces dolichol-linked oligosaccharides containing fourteen sugars, including two GlcNAcs, nine mannoses and three glucoses. Once assembled, the oligosaccharide is transferred from the lipid to nascent proteins by oligosaccharyltransferases. In the lumen of the endoplasmic reticulum, adds the first dolichyl beta-D-mannosyl phosphate derived mannose in an alpha-1,3 linkage to Man(5)GlcNAc(2)-PP-dolichol to produce Man(6)GlcNAc(2)-PP-dolichol. Man(6)GlcNAc(2)-PP-dolichol is a substrate for ALG9, the following enzyme in the biosynthetic pathway. This chain is Dol-P-Man:Man(5)GlcNAc(2)-PP-Dol alpha-1,3-mannosyltransferase, found in Mus musculus (Mouse).